Consider the following 218-residue polypeptide: MASLSTITQPSLVHIPGESVLHHVPSTCSFPWKPTINTKRIICSPARNSSEVSAEAETEGGSSTAVDEAPKESPSLISALNVERALRGLPITDVDHYGRLGIFRNCSYDQVTIGYKERVKELKEQGLDEEQLKTKMDLIKESYTILSTVEERRMYDWSLARSEKAERYVWPFEVDIMEPSREEPPPQEPEDVGPTRILGYFIGAWLVLGVALSVAFNR.

Residues methionine 1–serine 53 constitute a chloroplast transit peptide. Residues arginine 47–glutamate 72 are disordered. The 65-residue stretch at aspartate 95–leucine 159 folds into the J domain. A helical transmembrane segment spans residues isoleucine 197 to asparagine 217.

As to quaternary structure, part of the chloroplast NDH complex, composed of a mixture of chloroplast and nucleus encoded subunits. Component of the electron donor-binding subcomplex, at least composed of NDHS, NDHT and NDHU.

It localises to the plastid. Its subcellular location is the chloroplast thylakoid membrane. The catalysed reaction is a plastoquinone + NADH + (n+1) H(+)(in) = a plastoquinol + NAD(+) + n H(+)(out). The enzyme catalyses a plastoquinone + NADPH + (n+1) H(+)(in) = a plastoquinol + NADP(+) + n H(+)(out). Functionally, NDH shuttles electrons from NAD(P)H:plastoquinone, via FMN and iron-sulfur (Fe-S) centers, to quinones in the photosynthetic chain and possibly in a chloroplast respiratory chain. The immediate electron acceptor for the enzyme in this species is believed to be plastoquinone. Couples the redox reaction to proton translocation, and thus conserves the redox energy in a proton gradient. This Arabidopsis thaliana (Mouse-ear cress) protein is NAD(P)H-quinone oxidoreductase subunit U, chloroplastic.